A 235-amino-acid polypeptide reads, in one-letter code: MNEYFVNLNIKEMPETMRPREKLIARGEDKLDEAELLAIVLGSGTREMNALELARQLLARHGGSLRFLMSATLEELTAEKGIGMAKAVSIKAAIEMGRRVVGNIQLRRIIKSPEDVQEAVRELAMEEMRHYDREHFRVLYLDRKGGLITMQDISIGGLHSSIVHPREVFKTAVKKSAASMILVHNHPSGDPTPSQEDIEITRRLIEAGKIMGIEILDHVIIGEINYCSLKARGLI.

In terms of domain architecture, MPN spans 109-235 (IIKSPEDVQE…YCSLKARGLI (127 aa)). His-184, His-186, and Asp-197 together coordinate Zn(2+). Positions 184–197 (HNHPSGDPTPSQED) match the JAMM motif motif.

It belongs to the UPF0758 family.

The chain is UPF0758 protein Swol_1642 from Syntrophomonas wolfei subsp. wolfei (strain DSM 2245B / Goettingen).